Reading from the N-terminus, the 381-residue chain is Selenoprotein P (381 aa).

Positions 1–19 are cleaved as a signal peptide; the sequence is MWRSLGLALALCLLPSGGT. N46 carries an N-linked (GlcNAc...) asparagine glycan. U59 is a non-standard amino acid (selenocysteine). N-linked (GlcNAc...) (complex) asparagine glycosylation occurs at N83. N-linked (GlcNAc...) asparagine glycans are attached at residues N119, N128, and N174. The disordered stretch occupies residues 200–268; sequence TPSPHYHHEH…ENRDMPASED (69 aa). The span at 204-216 shows a compositional bias: basic residues; it reads HYHHEHHHNHGHQ. Residues 218–230 are compositionally biased toward polar residues; sequence LGSSELSENQQPG. Positions 243-255 are enriched in basic residues; sequence LHHHHKHKGQHRQ. Position 266 is a phosphoserine (S266). 3 non-standard amino acids (selenocysteine) are found at residues U300, U318, and U330. N338 is a glycosylation site (N-linked (GlcNAc...) asparagine). 6 non-standard amino acids (selenocysteine) are found at residues U345, U352, U367, U369, U376, and U378. A disordered region spans residues 355–381; sequence SQQLIPTEASASURUKNQAKKUEUPSN.

This sequence belongs to the selenoprotein P family. Post-translationally, phosphorylation sites are present in the extracellular medium. Made in the liver and heart and secreted into the plasma. It is also found in the kidney.

Its subcellular location is the secreted. Its function is as follows. Might be responsible for some of the extracellular antioxidant defense properties of selenium or might be involved in the transport of selenium. May supply selenium to tissues such as brain and testis. In Homo sapiens (Human), this protein is Selenoprotein P.